A 912-amino-acid polypeptide reads, in one-letter code: Rho guanine nucleotide exchange factor 1 (912 aa).

The RGSL domain maps to 41-232 (EQNSQFQSLE…GLYMRHLGVR (192 aa)). A disordered region spans residues 248-413 (KVMGNRRSDE…PDTLHSLPKS (166 aa)). Positions 283-313 (DFRHLKAEVDAEKPGATDRKGGVGMPSRDRN) are enriched in basic and acidic residues. The segment covering 365–381 (STDEGAETESPEPGDEG) has biased composition (acidic residues). Phosphoserine occurs at positions 374 and 409. The DH domain occupies 416–605 (KRQEVISELL…REILHHVNQA (190 aa)). Residues 647 to 760 (KLVHEGPLTW…WCALITETAG (114 aa)) form the PH domain. T695 is modified (phosphothreonine). Residue Y738 is modified to Phosphotyrosine; by JAK2. 2 disordered regions span residues 763 to 802 (KVPA…PADA) and 841 to 865 (AEED…LSPA). Low complexity predominate over residues 777–789 (PSSTREPLLSSSE). A Phosphoserine modification is found at S863. The stretch at 865 to 896 (ARTQEIQENLLSLEETMKQLEELEEEFCRLRP) forms a coiled coil.

In terms of assembly, interacts with RHOA, GNA12 and GNA13. Homooligomerizes through the coiled coil region. May interact with CCPG1. Interacts with CTNNAL1. Post-translationally, phosphorylated by PKCA. Angiotensin-2 induced Tyr-738 phosphorylation is mediated by JAK2. As to expression, ubiquitously expressed.

The protein resides in the cytoplasm. The protein localises to the membrane. In terms of biological role, seems to play a role in the regulation of RhoA GTPase by guanine nucleotide-binding alpha-12 (GNA12) and alpha-13 (GNA13) subunits. Acts as a GTPase-activating protein (GAP) for GNA12 and GNA13, and as guanine nucleotide exchange factor (GEF) for RhoA GTPase. Activated G alpha 13/GNA13 stimulates the RhoGEF activity through interaction with the RGS-like domain. This GEF activity is inhibited by binding to activated GNA12. Mediates angiotensin-2-induced RhoA activation. In lymphoid follicles, may trigger activation of GNA13 as part of S1PR2-dependent signaling pathway that leads to inhibition of germinal center (GC) B cell growth and migration outside the GC niche. In Homo sapiens (Human), this protein is Rho guanine nucleotide exchange factor 1 (ARHGEF1).